Here is a 105-residue protein sequence, read N- to C-terminus: Death-associated protein 1 homolog (105 aa).

Residues 75-105 form a disordered region; sequence AAQVAHQKPVPSAQKLPAGQHLNQHIHQPRK. Positions 95–105 are enriched in polar residues; that stretch reads HLNQHIHQPRK.

Belongs to the DAP-DAPL1 family. Associates with ribosomes; inhibiting translation. Interacts with eiF5a (eif5a and eif5a2); inhibiting translation.

Its function is as follows. Ribosome-binding protein involved in ribosome hibernation, a process during which ribosomes are stabilized in an inactive state and preserved from proteasomal degradation. Acts via its association with eiF5a (eif5a and eif5a2) at the polypeptide exit tunnel of the ribosome, preventing mRNA translation. Involved in ribosome hibernation in the mature egg by preventing mRNA translation, leading to ribosome inactivation. Ribosomes, which are produced in large quantities during oogenesis, are stored and translationally repressed in the egg and early embryo. Compared to dap1b, binds and inactivates ribosomes less efficiently. The chain is Death-associated protein 1 homolog from Danio rerio (Zebrafish).